The sequence spans 409 residues: Serine/threonine transporter SstT (409 aa).

Transmembrane regions (helical) follow at residues Leu24 to Phe44, Phe48 to Ile68, Ile82 to Met102, Ala142 to Leu162, Leu194 to Gly214, Leu218 to Val238, Ile292 to Met312, Gly319 to Cys339, and Val365 to Thr385.

Belongs to the dicarboxylate/amino acid:cation symporter (DAACS) (TC 2.A.23) family.

The protein resides in the cell inner membrane. The enzyme catalyses L-serine(in) + Na(+)(in) = L-serine(out) + Na(+)(out). It catalyses the reaction L-threonine(in) + Na(+)(in) = L-threonine(out) + Na(+)(out). In terms of biological role, involved in the import of serine and threonine into the cell, with the concomitant import of sodium (symport system). This Neisseria gonorrhoeae (strain NCCP11945) protein is Serine/threonine transporter SstT.